The following is a 527-amino-acid chain: Bacillolysin (527 aa).

The signal sequence occupies residues 1-28 (MKKSYLATSLTLSIAVGVSGFTSVPAFA). Positions 29–223 (KTKIDYHKQW…VINKYNMLDH (195 aa)) are cleaved as a propeptide — activation peptide. Asp276, Asp278, and Asp354 together coordinate Ca(2+). His358 contacts Zn(2+). The active site involves Glu359. Zn(2+)-binding residues include His362 and Glu382. 7 residues coordinate Ca(2+): Asp393, Asn394, Asp396, Glu401, Tyr404, Thr405, and Asp411. Residue His442 is the Proton donor of the active site.

It belongs to the peptidase M4 family. Ca(2+) is required as a cofactor. It depends on Zn(2+) as a cofactor.

It localises to the secreted. It carries out the reaction Similar, but not identical, to that of thermolysin.. In terms of biological role, extracellular zinc metalloprotease. The sequence is that of Bacillolysin (npr) from Brevibacillus brevis (Bacillus brevis).